Here is a 210-residue protein sequence, read N- to C-terminus: Protoporphyrinogen IX oxidase (210 aa).

Helical transmembrane passes span 22–42, 74–94, 103–123, 141–161, and 165–185; these read WFKA…FYLV, YNII…GLIF, GWLH…FYCG, FRAL…LAVF, and LPLD…AASI. His-27 serves as a coordination point for heme. Lys-108 contacts heme.

It belongs to the HemJ family. Homodimer. Can also form higher oligomers, most probably tetramers. Interacts with Sll1106, however it is unlikely that Sll1106 is required for PPO function. Requires heme b as cofactor.

It is found in the cell membrane. The catalysed reaction is protoporphyrinogen IX + 3 A = protoporphyrin IX + 3 AH2. Its pathway is porphyrin-containing compound metabolism; protoporphyrin-IX biosynthesis; protoporphyrin-IX from protoporphyrinogen-IX: step 1/1. Catalyzes the oxidation of protoporphyrinogen IX to protoporphyrin IX. Is involved in the biosynthesis of tetrapyrrole molecules like heme and chlorophyll. Does not use oxygen or artificial electron acceptors such as menadione or benzoquinone. Is functionally coupled with coproporphyrinogen III oxidase (CPO). Is essential for growth. The protein is Protoporphyrinogen IX oxidase of Synechocystis sp. (strain ATCC 27184 / PCC 6803 / Kazusa).